Here is a 238-residue protein sequence, read N- to C-terminus: Uridylate kinase (238 aa).

12 to 15 is an ATP binding site; it reads KLSG. Glycine 54 is a binding site for UMP. ATP is bound by residues glycine 55 and arginine 59. UMP is bound by residues aspartate 74 and 135–142; that span reads TGNPFFTT. Threonine 162, asparagine 163, tyrosine 168, and aspartate 171 together coordinate ATP.

This sequence belongs to the UMP kinase family. In terms of assembly, homohexamer.

The protein resides in the cytoplasm. It carries out the reaction UMP + ATP = UDP + ADP. The protein operates within pyrimidine metabolism; CTP biosynthesis via de novo pathway; UDP from UMP (UMPK route): step 1/1. Inhibited by UTP. In terms of biological role, catalyzes the reversible phosphorylation of UMP to UDP. In Rhodopseudomonas palustris (strain BisB18), this protein is Uridylate kinase.